The sequence spans 185 residues: Inner membrane-spanning protein YciB (185 aa).

5 helical membrane-spanning segments follow: residues 19 to 39, 49 to 69, 72 to 92, 122 to 142, and 150 to 170; these read IHGI…LMAW, TMTW…LYFH, TFIK…LLFT, GYWI…AYAF, and FKLF…AVVI.

This sequence belongs to the YciB family.

Its subcellular location is the cell inner membrane. Plays a role in cell envelope biogenesis, maintenance of cell envelope integrity and membrane homeostasis. This is Inner membrane-spanning protein YciB from Acidithiobacillus ferrooxidans (strain ATCC 23270 / DSM 14882 / CIP 104768 / NCIMB 8455) (Ferrobacillus ferrooxidans (strain ATCC 23270)).